Here is a 355-residue protein sequence, read N- to C-terminus: Small ribosomal subunit protein uS2 (355 aa).

Belongs to the universal ribosomal protein uS2 family.

In Methylorubrum extorquens (strain CM4 / NCIMB 13688) (Methylobacterium extorquens), this protein is Small ribosomal subunit protein uS2.